The sequence spans 295 residues: uncharacterized protein (295 aa).

A compositionally biased stretch (basic residues) spans 1–13; it reads MRHSVARPTRLPR. Disordered stretches follow at residues 1–111 and 183–295; these read MRHS…AGLS and TSAF…PRDS. Residues 57–67 show a composition bias toward low complexity; sequence AGPSAGAAARP. Pro residues predominate over residues 68–77; the sequence is AAPPPQPREP. 2 stretches are compositionally biased toward basic and acidic residues: residues 245–257 and 280–295; these read LRPK…DRRP and GEPH…PRDS.

This is an uncharacterized protein from Homo sapiens (Human).